The chain runs to 76 residues: Exodeoxyribonuclease 7 small subunit (76 aa).

This sequence belongs to the XseB family. As to quaternary structure, heterooligomer composed of large and small subunits.

Its subcellular location is the cytoplasm. It carries out the reaction Exonucleolytic cleavage in either 5'- to 3'- or 3'- to 5'-direction to yield nucleoside 5'-phosphates.. Bidirectionally degrades single-stranded DNA into large acid-insoluble oligonucleotides, which are then degraded further into small acid-soluble oligonucleotides. The protein is Exodeoxyribonuclease 7 small subunit of Bacillus cytotoxicus (strain DSM 22905 / CIP 110041 / 391-98 / NVH 391-98).